A 120-amino-acid polypeptide reads, in one-letter code: Putative non-specific lipid-transfer protein 14 (120 aa).

A signal peptide spans 1-22 (MTRSFSPVVSLFLLLLQTICSA). Cystine bridges form between Cys-30–Cys-80, Cys-40–Cys-57, Cys-58–Cys-102, and Cys-78–Cys-116.

It belongs to the plant LTP family.

Its function is as follows. Plant non-specific lipid-transfer proteins transfer phospholipids as well as galactolipids across membranes. May play a role in wax or cutin deposition in the cell walls of expanding epidermal cells and certain secretory tissues. The sequence is that of Putative non-specific lipid-transfer protein 14 (LTP14) from Arabidopsis thaliana (Mouse-ear cress).